We begin with the raw amino-acid sequence, 113 residues long: Hydrogenase maturation factor HypA (113 aa).

Residue His-2 participates in Ni(2+) binding. Positions 73, 76, 89, and 92 each coordinate Zn(2+).

The protein belongs to the HypA/HybF family.

Functionally, involved in the maturation of [NiFe] hydrogenases. Required for nickel insertion into the metal center of the hydrogenase. In Chlorobaculum parvum (strain DSM 263 / NCIMB 8327) (Chlorobium vibrioforme subsp. thiosulfatophilum), this protein is Hydrogenase maturation factor HypA.